A 122-amino-acid polypeptide reads, in one-letter code: MIQTESRLEVADNTGAKSVQCIKVLGGSHRRYASVGDIIKVTIKEAAPRGRVKKGEVYSAVVVRTAKGIRRADGSLVKFDGNAAVLLNAKLEPIGTRIFGPVTRELRNEKFMKIVSLAPEVL.

This sequence belongs to the universal ribosomal protein uL14 family. Part of the 50S ribosomal subunit. Forms a cluster with proteins L3 and L19. In the 70S ribosome, L14 and L19 interact and together make contacts with the 16S rRNA in bridges B5 and B8.

Functionally, binds to 23S rRNA. Forms part of two intersubunit bridges in the 70S ribosome. In Delftia acidovorans (strain DSM 14801 / SPH-1), this protein is Large ribosomal subunit protein uL14.